We begin with the raw amino-acid sequence, 304 residues long: Undecaprenyl-diphosphatase (304 aa).

Transmembrane regions (helical) follow at residues 1–21 (MSLL…FLPV), 54–74 (TTLA…AAGL), 90–110 (LAWF…LFEE), 114–134 (ALGN…LLAA), 192–212 (FLLS…KTVP), 225–245 (LVGT…LLGW), and 253–273 (LFVV…WQGV).

Belongs to the UppP family.

Its subcellular location is the cell inner membrane. It catalyses the reaction di-trans,octa-cis-undecaprenyl diphosphate + H2O = di-trans,octa-cis-undecaprenyl phosphate + phosphate + H(+). Functionally, catalyzes the dephosphorylation of undecaprenyl diphosphate (UPP). Confers resistance to bacitracin. In Anaeromyxobacter sp. (strain Fw109-5), this protein is Undecaprenyl-diphosphatase.